We begin with the raw amino-acid sequence, 346 residues long: Protein RecA (346 aa).

65–72 is an ATP binding site; that stretch reads GPESSGKT.

It belongs to the RecA family.

It localises to the cytoplasm. Its function is as follows. Can catalyze the hydrolysis of ATP in the presence of single-stranded DNA, the ATP-dependent uptake of single-stranded DNA by duplex DNA, and the ATP-dependent hybridization of homologous single-stranded DNAs. It interacts with LexA causing its activation and leading to its autocatalytic cleavage. In Enterococcus mundtii, this protein is Protein RecA.